We begin with the raw amino-acid sequence, 239 residues long: 2',3'-cyclic-nucleotide 3'-phosphodiesterase (239 aa).

Catalysis depends on proton donor/acceptor residues His-39 and His-150.

Belongs to the 2H phosphoesterase superfamily. CPD1 family.

Its subcellular location is the golgi apparatus. The enzyme catalyses ADP-alpha-D-ribose 1'',2''-cyclic phosphate + H2O = ADP-alpha-D-ribose 1''-phosphate + H(+). The catalysed reaction is 2',3'-cyclophospho-AMP + H2O = adenosine 2'-phosphate + H(+). It catalyses the reaction 2',3'-cyclophospho-GMP + H2O = guanosine 2'-phosphate + H(+). It carries out the reaction 2',3'-cyclophospho-UMP + H2O = uridine 2'-phosphate + H(+). The enzyme catalyses 2',3'-cyclophospho-CMP + H2O = cytidine 2'-phosphate + H(+). The catalysed reaction is a nucleoside 2',3'-cyclic phosphate + H2O = a nucleoside 2'-phosphate + H(+). Functionally, involved in the metabolism of ADP-ribose 1',2'-cyclic phosphate which is produced as a consequence of tRNA splicing. The protein is 2',3'-cyclic-nucleotide 3'-phosphodiesterase of Saccharomyces cerevisiae (strain ATCC 204508 / S288c) (Baker's yeast).